Consider the following 188-residue polypeptide: Large ribosomal subunit protein eL18 (188 aa).

The interval 147-188 (EAEKHFGPAPGVPHSHTKPYVRSKGRKFERARGRRASRAYKN) is disordered. 2 stretches are compositionally biased toward basic residues: residues 161–171 (SHTKPYVRSKG) and 178–188 (RGRRASRAYKN).

The protein belongs to the eukaryotic ribosomal protein eL18 family.

It localises to the cytoplasm. The sequence is that of Large ribosomal subunit protein eL18 (rpl-18) from Caenorhabditis elegans.